Consider the following 485-residue polypeptide: Argininosuccinate lyase (485 aa).

The protein belongs to the lyase 1 family. Argininosuccinate lyase subfamily.

It is found in the cytoplasm. The catalysed reaction is 2-(N(omega)-L-arginino)succinate = fumarate + L-arginine. Its pathway is amino-acid biosynthesis; L-arginine biosynthesis; L-arginine from L-ornithine and carbamoyl phosphate: step 3/3. The polypeptide is Argininosuccinate lyase (Nitrosopumilus maritimus (strain SCM1)).